Here is a 642-residue protein sequence, read N- to C-terminus: Mini-chromosome maintenance complex-binding protein (642 aa).

Positions 151-161 (ARVSPSTSYTP) are enriched in polar residues. The tract at residues 151–200 (ARVSPSTSYTPSRHKRSYEDDEDMDLQPNKQKDQHSGARQAGGLGGLHWR) is disordered. A Phosphoserine modification is found at Ser154. Position 160 is a phosphothreonine (Thr160). 2 positions are modified to phosphoserine: Ser167 and Ser298.

The protein belongs to the MCMBP family. Interacts with the MCM complex: associates with the MCM3-7 complex which lacks MCM2, while it does not interact with the MCM complex when MCM2 is present (MCM2-7 complex). Interacts with the RPA complex, when composed of all RPA1, RPA2 and RPA3 components, but not with RPA1 or RPA2 alone.

It is found in the nucleus. In terms of biological role, associated component of the MCM complex that acts as a regulator of DNA replication. Binds to the MCM complex during late S phase and promotes the disassembly of the MCM complex from chromatin, thereby acting as a key regulator of pre-replication complex (pre-RC) unloading from replicated DNA. Can dissociate the MCM complex without addition of ATP; probably acts by destabilizing interactions of each individual subunits of the MCM complex. Required for sister chromatid cohesion. In Rattus norvegicus (Rat), this protein is Mini-chromosome maintenance complex-binding protein (Mcmbp).